A 417-amino-acid polypeptide reads, in one-letter code: MSKLKITNVKTILTAPGGIDLAVVKVETNEPGLYGLGCATFTQRIFAVKSAIDEYMAPFLIGKDPTRIEDIWQSAAVSGYWRNGPIMNNALSGVDMALWDIKGKLAGMPVYELLGGKCRDGIPLYCHTDGGDEVEVEDNIRARMEEGYQYVRCQMGMYGGAGTDDLKLIATQLARAKNIQPKRSPRSKTPGIYFDPEAYAKSVPRLFEHLRNKLGFGIEFIHDVHERVTPVTAIQLAKTLEPYQLFYLEDPVAPENIDWLRMLRQQSSTPISMGELFVNINEWKPLIDNKLIDYIRCHVSTIGGITPAKKLAVYSELNGVRTAWHGPGDISPVGVCANMHLDMSSPNFGIQEYTPMNDALREVFPGCPEIDQGYAYVNDKPGLGIDINETLAEKYPCDGGIPSWTMARTPDGTASRP.

Histidine 127 is a substrate binding site. Tyrosine 158 (proton donor/acceptor) is an active-site residue. Position 223 (aspartate 223) interacts with Mg(2+). Histidine 225 serves as the catalytic Proton donor/acceptor. Residues glutamate 249 and glutamate 275 each contribute to the Mg(2+) site. Substrate contacts are provided by glutamate 275, arginine 296, histidine 325, aspartate 329, and glutamate 352.

The protein belongs to the mandelate racemase/muconate lactonizing enzyme family. GalD subfamily. The cofactor is Mg(2+).

It catalyses the reaction D-mannonate = 2-dehydro-3-deoxy-D-gluconate + H2O. The catalysed reaction is D-gluconate = 2-dehydro-3-deoxy-D-gluconate + H2O. Functionally, has low dehydratase activity with D-mannonate and D-gluconate, suggesting that these are not physiological substrates and that it has no significant role in the in vivo degradation of these compounds. Has no detectable activity with a panel of 70 other acid sugars (in vitro). The chain is D-galactonate dehydratase family member Dd703_0947 from Musicola paradisiaca (strain Ech703) (Dickeya paradisiaca).